Here is a 414-residue protein sequence, read N- to C-terminus: 25-hydroxycholesterol 7-alpha-hydroxylase (414 aa).

C354 is a binding site for heme.

This sequence belongs to the cytochrome P450 family. The cofactor is heme. Highly expressed in brain; also expressed in liver and kidney.

It localises to the endoplasmic reticulum membrane. The protein localises to the microsome membrane. The catalysed reaction is 25-hydroxycholesterol + reduced [NADPH--hemoprotein reductase] + O2 = 7alpha,25-dihydroxycholesterol + oxidized [NADPH--hemoprotein reductase] + H2O + H(+). It catalyses the reaction (25R)-cholest-5-ene-3beta,26-diol + reduced [NADPH--hemoprotein reductase] + O2 = (25R)-cholest-5-en-3beta,7alpha,26-triol + oxidized [NADPH--hemoprotein reductase] + H2O + H(+). Its pathway is lipid metabolism; bile acid biosynthesis. Oxysterol 7alpha-hydroxylase that mediates formation of 7-alpha,25-dihydroxycholesterol (7-alpha,25-OHC) from 25-hydroxycholesterol. Plays a key role in cell positioning and movement in lymphoid tissues: 7-alpha,25-dihydroxycholesterol (7-alpha,25-OHC) acts as a ligand for the G protein-coupled receptor GPR183/EBI2, a chemotactic receptor for a number of lymphoid cells. This Rattus norvegicus (Rat) protein is 25-hydroxycholesterol 7-alpha-hydroxylase (Cyp7b1).